The sequence spans 309 residues: Probable WRKY transcription factor 26 (309 aa).

Residues 1–24 (MGSFDRQRAVPKFKTATPSPLPLS) form a disordered region. Positions 111–176 (SSNKTSDDGY…YKGSHNHPKP (66 aa)) form a DNA-binding region, WRKY 1. Zn(2+) is bound by residues Cys-142, Cys-147, His-171, and His-173. The interval 167-210 (YKGSHNHPKPQSTKRSSSTAIAAHQNSSNGDGKDIGEDETEAKR) is disordered. The segment covering 175–196 (KPQSTKRSSSTAIAAHQNSSNG) has biased composition (polar residues). The segment covering 197 to 210 (DGKDIGEDETEAKR) has biased composition (basic and acidic residues). Residues 228 to 293 (SDIDILDDGY…YEGKHKHQIP (66 aa)) constitute a DNA-binding region (WRKY 2). Positions 259, 264, 288, and 290 each coordinate Zn(2+).

The protein belongs to the WRKY group I family. As to quaternary structure, interacts with VQ10.

Its subcellular location is the nucleus. Functionally, transcription factor. Interacts specifically with the W box (5'-(T)TGAC[CT]-3'), a frequently occurring elicitor-responsive cis-acting element. Functions with WRKY25 and WRKY33 as positive regulator of plant thermotolerance by partially participating in ethylene-response signal transduction pathway. In Arabidopsis thaliana (Mouse-ear cress), this protein is Probable WRKY transcription factor 26 (WRKY26).